A 245-amino-acid chain; its full sequence is Keratin-associated protein 10-12 (245 aa).

19 repeat units span residues 36-40 (CCEPP), 41-45 (CCAPA), 62-66 (CCRVT), 84-88 (CCQQS), 94-98 (CCTSS), 104-108 (CCVPV), 109-113 (CCKTV), 114-118 (CCKPV), 119-123 (CCMPV), 124-128 (CCGPS), 131-135 (CCQQS), 141-145 (CCISS), 151-155 (CCVPV), 156-160 (CCKPI), 161-165 (CCVPV), 173-177 (CCQQS), 183-187 (CCTTS), 188-192 (CCRPS), and 214-218 (CCVPT). The segment at 36–218 (CCEPPCCAPA…VPVPSCCVPT (183 aa)) is 19 X 5 AA repeats of C-C-X(3).

Belongs to the KRTAP type 10 family. In terms of assembly, interacts with hair keratins. In terms of tissue distribution, restricted to a narrow region of the hair fiber cuticle, lying approximately 20 cell layers above the apex of the dermal papilla of the hair root; not detected in any other tissues.

In the hair cortex, hair keratin intermediate filaments are embedded in an interfilamentous matrix, consisting of hair keratin-associated proteins (KRTAP), which are essential for the formation of a rigid and resistant hair shaft through their extensive disulfide bond cross-linking with abundant cysteine residues of hair keratins. The matrix proteins include the high-sulfur and high-glycine-tyrosine keratins. The sequence is that of Keratin-associated protein 10-12 (KRTAP10-12) from Homo sapiens (Human).